A 368-amino-acid chain; its full sequence is 1-deoxy-D-xylulose 5-phosphate reductoisomerase (368 aa).

NADPH-binding residues include threonine 7, glycine 8, serine 9, isoleucine 10, glycine 31, lysine 32, asparagine 33, and asparagine 113. A 1-deoxy-D-xylulose 5-phosphate-binding site is contributed by lysine 114. NADPH is bound at residue glutamate 115. Aspartate 133 lines the Mn(2+) pocket. Residues serine 134, glutamate 135, serine 158, and histidine 181 each contribute to the 1-deoxy-D-xylulose 5-phosphate site. Glutamate 135 lines the Mn(2+) pocket. Position 187 (glycine 187) interacts with NADPH. Residues serine 194, asparagine 199, lysine 200, and glutamate 203 each coordinate 1-deoxy-D-xylulose 5-phosphate. Mn(2+) is bound at residue glutamate 203.

This sequence belongs to the DXR family. Mg(2+) serves as cofactor. It depends on Mn(2+) as a cofactor.

The catalysed reaction is 2-C-methyl-D-erythritol 4-phosphate + NADP(+) = 1-deoxy-D-xylulose 5-phosphate + NADPH + H(+). It functions in the pathway isoprenoid biosynthesis; isopentenyl diphosphate biosynthesis via DXP pathway; isopentenyl diphosphate from 1-deoxy-D-xylulose 5-phosphate: step 1/6. Its function is as follows. Catalyzes the NADPH-dependent rearrangement and reduction of 1-deoxy-D-xylulose-5-phosphate (DXP) to 2-C-methyl-D-erythritol 4-phosphate (MEP). The protein is 1-deoxy-D-xylulose 5-phosphate reductoisomerase of Helicobacter pylori (strain J99 / ATCC 700824) (Campylobacter pylori J99).